The primary structure comprises 824 residues: Tuftelin-interacting protein 11 (824 aa).

Residues 1 to 135 (MSMSHLYGKD…RTFAGGIKSN (135 aa)) are disordered. The segment covering 11–25 (EDSDGVEMENFEITD) has biased composition (acidic residues). Composition is skewed to basic and acidic residues over residues 41–61 (QTKE…DERP) and 85–114 (PAAE…EAKK). Over residues 122–135 (KPSQRTFAGGIKSN) the composition is skewed to polar residues. The region spanning 145 to 191 (TKGIGQKLLQKMGYMPGRGLGKNAQGIIAPIEAKQRRGKGAVGAYGS) is the G-patch domain.

It belongs to the TFP11/STIP family. Identified in the spliceosome C complex.

It localises to the nucleus. Functionally, involved in pre-mRNA splicing, specifically in spliceosome disassembly during late-stage splicing events. The polypeptide is Tuftelin-interacting protein 11 (tfip11) (Xenopus laevis (African clawed frog)).